Consider the following 186-residue polypeptide: Elongation factor P (186 aa).

This sequence belongs to the elongation factor P family.

Its subcellular location is the cytoplasm. It functions in the pathway protein biosynthesis; polypeptide chain elongation. Functionally, involved in peptide bond synthesis. Stimulates efficient translation and peptide-bond synthesis on native or reconstituted 70S ribosomes in vitro. Probably functions indirectly by altering the affinity of the ribosome for aminoacyl-tRNA, thus increasing their reactivity as acceptors for peptidyl transferase. This is Elongation factor P from Shewanella baltica (strain OS223).